A 535-amino-acid chain; its full sequence is Calcium-dependent protein kinase 5 (535 aa).

Residues 1 to 46 are disordered; the sequence is MGNACRGSFGGKTFQGYPQPQDHSESNSNPKHNSDSPKPKKEQQPL. G2 carries the N-myristoyl glycine lipid modification. The S-palmitoyl cysteine moiety is linked to residue C5. The segment covering 32-43 has biased composition (basic and acidic residues); sequence HNSDSPKPKKEQ. The region spanning 72 to 330 is the Protein kinase domain; that stretch reads YTLGRKLGQG…AHEVLCHPWI (259 aa). ATP is bound by residues 78–86 and K101; that span reads LGQGQFGTT. D196 acts as the Proton acceptor in catalysis. The segment at 336–366 is autoinhibitory domain; it reads APDRALDPAVLSRLKHFSAMNKLKKMALRVI. EF-hand domains lie at 373 to 408, 409 to 444, 445 to 480, and 484 to 514; these read EEIA…YGST, LKDI…LNKL, DREE…HNIT, and FEDI…GNPC. Residues D386, D388, S390, E397, D422, D424, S426, T428, E433, D458, D460, S462, Y464, E469, D492, D494, D496, R498, and E503 each coordinate Ca(2+).

The protein belongs to the protein kinase superfamily. Ser/Thr protein kinase family. CDPK subfamily.

The protein localises to the cell membrane. It carries out the reaction L-seryl-[protein] + ATP = O-phospho-L-seryl-[protein] + ADP + H(+). The enzyme catalyses L-threonyl-[protein] + ATP = O-phospho-L-threonyl-[protein] + ADP + H(+). Its activity is regulated as follows. Activated by calcium. Autophosphorylation may play an important role in the regulation of the kinase activity. Functionally, regulates the production of reactive oxygen species (ROS) by NADPH oxidase. The protein is Calcium-dependent protein kinase 5 (CPK5) of Solanum tuberosum (Potato).